Reading from the N-terminus, the 777-residue chain is NAD(P)H-quinone oxidoreductase subunit 5, chloroplastic (777 aa).

16 helical membrane-spanning segments follow: residues 9–29 (WIIP…LLLF), 40–60 (WSFP…YLSI), 89–109 (IDPL…LVLF), 125–145 (FAYL…SNLI), 147–167 (IYIF…FWFT), 185–205 (GDFG…SFEF), 220–240 (NQVH…GAVA), 259–279 (TPIS…FLVA), 290–312 (YIMN…LALA), 328–348 (LGYM…FHLI), 355–375 (ALLF…VGYS), 397–417 (TAFL…CFWS), 426–446 (WLYS…TAFY), 550–570 (LFSL…GIPF), 604–624 (FVTN…IATF), and 731–751 (IFIF…FFVL).

It belongs to the complex I subunit 5 family. In terms of assembly, NDH is composed of at least 16 different subunits, 5 of which are encoded in the nucleus.

It is found in the plastid. The protein localises to the chloroplast thylakoid membrane. The catalysed reaction is a plastoquinone + NADH + (n+1) H(+)(in) = a plastoquinol + NAD(+) + n H(+)(out). It carries out the reaction a plastoquinone + NADPH + (n+1) H(+)(in) = a plastoquinol + NADP(+) + n H(+)(out). In terms of biological role, NDH shuttles electrons from NAD(P)H:plastoquinone, via FMN and iron-sulfur (Fe-S) centers, to quinones in the photosynthetic chain and possibly in a chloroplast respiratory chain. The immediate electron acceptor for the enzyme in this species is believed to be plastoquinone. Couples the redox reaction to proton translocation, and thus conserves the redox energy in a proton gradient. This Oenothera elata subsp. hookeri (Hooker's evening primrose) protein is NAD(P)H-quinone oxidoreductase subunit 5, chloroplastic (ndhF).